Here is a 403-residue protein sequence, read N- to C-terminus: Methylthioribose-1-phosphate isomerase (403 aa).

Residue Asp277 is the Proton donor of the active site.

The protein belongs to the eIF-2B alpha/beta/delta subunits family. MtnA subfamily.

Its subcellular location is the cytoplasm. The protein resides in the nucleus. It catalyses the reaction 5-(methylsulfanyl)-alpha-D-ribose 1-phosphate = 5-(methylsulfanyl)-D-ribulose 1-phosphate. It participates in amino-acid biosynthesis; L-methionine biosynthesis via salvage pathway; L-methionine from S-methyl-5-thio-alpha-D-ribose 1-phosphate: step 1/6. Catalyzes the interconversion of methylthioribose-1-phosphate (MTR-1-P) into methylthioribulose-1-phosphate (MTRu-1-P). The sequence is that of Methylthioribose-1-phosphate isomerase from Lodderomyces elongisporus (strain ATCC 11503 / CBS 2605 / JCM 1781 / NBRC 1676 / NRRL YB-4239) (Yeast).